A 1781-amino-acid chain; its full sequence is Chitin synthase 7 (1781 aa).

Residues Asn133, Asn534, Asn629, Asn644, Asn655, and Asn660 are each glycosylated (N-linked (GlcNAc...) asparagine). 2 helical membrane passes run Ala741–Val761 and Leu777–Phe797. 2 N-linked (GlcNAc...) asparagine glycosylation sites follow: Asn889 and Asn1011. A helical transmembrane segment spans residues Leu1048 to Leu1068. An N-linked (GlcNAc...) asparagine glycan is attached at Asn1413. A run of 3 helical transmembrane segments spans residues Leu1444–Leu1464, Ile1471–Ile1491, and Ile1499–Tyr1519. N-linked (GlcNAc...) asparagine glycosylation occurs at Asn1526. The disordered stretch occupies residues Gln1677–Gln1712. The span at Arg1690–Arg1702 shows a compositional bias: polar residues. One can recognise a DEK-C domain in the interval Gly1723 to Glu1779.

Belongs to the chitin synthase family. Class V subfamily.

Its subcellular location is the cell membrane. It catalyses the reaction [(1-&gt;4)-N-acetyl-beta-D-glucosaminyl](n) + UDP-N-acetyl-alpha-D-glucosamine = [(1-&gt;4)-N-acetyl-beta-D-glucosaminyl](n+1) + UDP + H(+). Its function is as follows. Polymerizes chitin, a structural polymer of the cell wall and septum, by transferring the sugar moiety of UDP-GlcNAc to the non-reducing end of the growing chitin polymer. Shows additive effects in septum formation with CHS1, CHS2, CHS3A, CHS4, CHS5 and CHS6. Indispensable for perithecia formation and regulates conidiation. Plays an important role in the response to cell wall stress. Also required for hyphal growth and pathogenicity. The protein is Chitin synthase 7 of Gibberella zeae (strain ATCC MYA-4620 / CBS 123657 / FGSC 9075 / NRRL 31084 / PH-1) (Wheat head blight fungus).